Here is a 592-residue protein sequence, read N- to C-terminus: Keratin, type II cytoskeletal 5 (592 aa).

Residues 1 to 18 show a composition bias toward low complexity; sequence MSRQSSVSFRSGGSRSFS. Positions 1–20 are disordered; that stretch reads MSRQSSVSFRSGGSRSFSTA. The segment at 1–169 is head; sequence MSRQSSVSFR…DPSIQRVRTE (169 aa). S5, S8, S16, and S21 each carry phosphoserine. T24 is modified (phosphothreonine; by CDK1). S26, S36, S50, S64, S71, S75, and S82 each carry phosphoserine. Phosphothreonine; by CDK1 is present on T153. T168 carries the post-translational modification Phosphothreonine; by AURKB. The tract at residues 170–205 is coil 1A; sequence EREQIKTLNNKFASFIDKVRFLEQQNKVLDTKWTLL. The IF rod domain maps to 170–483; that stretch reads EREQIKTLNN…KLLEGEECRL (314 aa). Residues 206–224 are linker 1; it reads QEQGTKTVRQNLEPLFEQY. A coil 1B region spans residues 225-317; that stretch reads INNLRRQLDS…FFDAELSQMQ (93 aa). A linker 12 region spans residues 318-340; it reads THVSDTSVVLSMDNNRNLDLDSI. The segment at 341–479 is coil 2; the sequence is IAEVKAQYEE…ATYRKLLEGE (139 aa). The tract at residues 480-592 is tail; that stretch reads ECRLSGEGVG…TSSSRKSFKS (113 aa). The disordered stretch occupies residues 568 to 592; that stretch reads GSGGGSSSSVKFVSTTSSSRKSFKS. Over residues 574-592 the composition is skewed to low complexity; it reads SSSVKFVSTTSSSRKSFKS.

This sequence belongs to the intermediate filament family. As to quaternary structure, heterodimer of a type I and a type II keratin. Heterodimer with type I keratin KRT25 leading to the formation of keratin intermediate filament (KIF) network. Forms a heterodimer (via 2B domains) with KRT14 (via 2B domains). Interacts with TCHP. Interacts with EPPK1. Interacts with AMELX. Interacts with PKP1 (via N-terminus) and PKP2. Post-translationally, phosphorylated by CDK1, AURKB and Rho-kinase, phosphorylation is regulated by the cell cycle. Thr-24 phosphorylation, mediated by CDK1, peaks during prometaphase or metaphase cells with phosphorylated filamentous structures evident throughout the cytoplasm during early mitosis. CDK1 phosphorylates Thr-24 in mitotic cells at the site of injury. O-glycosylated.

It localises to the cytoplasm. Functionally, required for the formation of keratin intermediate filaments in the basal epidermis and maintenance of the skin barrier in response to mechanical stress. Regulates the recruitment of Langerhans cells to the epidermis, potentially by modulation of the abundance of macrophage chemotactic cytokines, macrophage inflammatory cytokines and CTNND1 localization in keratinocytes. The sequence is that of Keratin, type II cytoskeletal 5 (KRT5) from Pan troglodytes (Chimpanzee).